The primary structure comprises 161 residues: Endoribonuclease YbeY (161 aa).

His127, His131, and His137 together coordinate Zn(2+).

This sequence belongs to the endoribonuclease YbeY family. Requires Zn(2+) as cofactor.

Its subcellular location is the cytoplasm. Single strand-specific metallo-endoribonuclease involved in late-stage 70S ribosome quality control and in maturation of the 3' terminus of the 16S rRNA. The protein is Endoribonuclease YbeY of Listeria welshimeri serovar 6b (strain ATCC 35897 / DSM 20650 / CCUG 15529 / CIP 8149 / NCTC 11857 / SLCC 5334 / V8).